Here is a 173-residue protein sequence, read N- to C-terminus: CDP-archaeol synthase (173 aa).

Helical transmembrane passes span Gly15–Gly35, Gly59–Gly79, Ala84–Val104, Val118–Trp138, and Gly142–Ile162.

This sequence belongs to the CDP-archaeol synthase family. Requires Mg(2+) as cofactor.

The protein localises to the cell membrane. The enzyme catalyses 2,3-bis-O-(geranylgeranyl)-sn-glycerol 1-phosphate + CTP + H(+) = CDP-2,3-bis-O-(geranylgeranyl)-sn-glycerol + diphosphate. It participates in membrane lipid metabolism; glycerophospholipid metabolism. Catalyzes the formation of CDP-2,3-bis-(O-geranylgeranyl)-sn-glycerol (CDP-archaeol) from 2,3-bis-(O-geranylgeranyl)-sn-glycerol 1-phosphate (DGGGP) and CTP. This reaction is the third ether-bond-formation step in the biosynthesis of archaeal membrane lipids. The sequence is that of CDP-archaeol synthase from Methanopyrus kandleri (strain AV19 / DSM 6324 / JCM 9639 / NBRC 100938).